The primary structure comprises 109 residues: Tetraspanin-31 (109 aa).

Topologically, residues 1–12 (MVCGGFACSKNA) are cytoplasmic. A helical membrane pass occupies residues 13-33 (LCALNVVYMLVGLLLIGVAAW). Residues 34 to 44 (AKGLGLVSSIH) are Extracellular-facing. A helical transmembrane segment spans residues 45 to 65 (IIGGVIAVGVFLLLIAVAGLV). The Cytoplasmic segment spans residues 66–72 (GAVNHHQ). A helical transmembrane segment spans residues 73–93 (VLLFFYMIILGLVFIFQFGIS). Over 94–109 (CSCLAINLSKQAGIIN) the chain is Extracellular. Asn100 carries N-linked (GlcNAc...) asparagine glycosylation.

This sequence belongs to the tetraspanin (TM4SF) family.

It is found in the membrane. The polypeptide is Tetraspanin-31 (TSPAN31) (Sus scrofa (Pig)).